The chain runs to 229 residues: Large ribosomal subunit protein uL1 (229 aa).

It belongs to the universal ribosomal protein uL1 family. As to quaternary structure, part of the 50S ribosomal subunit.

In terms of biological role, binds directly to 23S rRNA. The L1 stalk is quite mobile in the ribosome, and is involved in E site tRNA release. Protein L1 is also a translational repressor protein, it controls the translation of the L11 operon by binding to its mRNA. In Clostridium botulinum (strain Alaska E43 / Type E3), this protein is Large ribosomal subunit protein uL1.